The primary structure comprises 270 residues: Calpain small subunit 1 (270 aa).

Met1 carries the post-translational modification N-acetylmethionine. Residue Ser6 is modified to Phosphoserine. An EF-hand 1; atypical domain is found at 98 to 132 (EEERQFRKLFVQLAGDDMEVSATELMNILNKVVTR). Ca(2+) is bound by residues Ala111, Asp114, Glu116, Glu121, Asp139, Asp154, Asp156, Thr158, Lys160, and Glu165. EF-hand domains are found at residues 141–174 (FGID…NNIK), 171–206 (NNIK…AGFH), 207–235 (LNQH…ISCL), and 236–270 (VRLD…TMYS). Lys181 is modified (N6-acetyllysine). The Ca(2+) site is built by Asp184, Asp186, Ser188, Thr190, Glu195, and Asp227.

Homodimer or heterodimer of a large (catalytic) and a small (regulatory) subunit. In presence of calcium, the heterodimer dissociates.

It is found in the cytoplasm. It localises to the cell membrane. Regulatory subunit of the calcium-regulated non-lysosomal thiol-protease which catalyzes limited proteolysis of substrates involved in cytoskeletal remodeling and signal transduction. Essential for embryonic development. In Rattus norvegicus (Rat), this protein is Calpain small subunit 1 (Capns1).